The primary structure comprises 1807 residues: Integrin beta-4 (1807 aa).

Residues 1–27 (MAGLCSSPWVKLLLAVVLSAGLPGNMA) form the signal peptide. Residues 28-713 (NRCKKAQVKS…KKKDCLPAPS (686 aa)) are Extracellular-facing. The region spanning 29–73 (RCKKAQVKSCTECIRVDKSCAYCTDELFKERRCNTQADVLAAGCR) is the PSI domain. Cystine bridges form between cysteine 30–cysteine 48, cysteine 38–cysteine 456, cysteine 41–cysteine 61, cysteine 51–cysteine 72, cysteine 245–cysteine 288, cysteine 458–cysteine 477, cysteine 469–cysteine 480, and cysteine 482–cysteine 491. A VWFA domain is found at 131–340 (DLYILMDFSN…SYYEKLHKYF (210 aa)). 2 residues coordinate Mg(2+): serine 139 and serine 141. Serine 141, aspartate 144, aspartate 145, and aspartate 176 together coordinate Ca(2+). The involved in NRG1- and IGF1-binding stretch occupies residues 194–199 (WPNSDP). Ca(2+) contacts are provided by asparagine 228, aspartate 230, proline 232, and glutamate 233. Glutamate 233 contacts Mg(2+). Asparagine 327 carries N-linked (GlcNAc...) asparagine glycosylation. Position 350 (glutamate 350) interacts with Ca(2+). I-EGF domains lie at 458-492 (CELQ…KTCN), 493-538 (CSTG…HFCE), 539-575 (YDNF…RSCD), and 576-617 (CPLS…TTCE). Residue asparagine 492 is glycosylated (N-linked (GlcNAc...) asparagine). Intrachain disulfides connect cysteine 493/cysteine 521, cysteine 504/cysteine 519, cysteine 513/cysteine 524, cysteine 526/cysteine 537, cysteine 544/cysteine 558, cysteine 552/cysteine 563, cysteine 565/cysteine 574, cysteine 576/cysteine 599, cysteine 583/cysteine 597, cysteine 591/cysteine 602, and cysteine 604/cysteine 616. Asparagine 580 carries an N-linked (GlcNAc...) asparagine glycan. N-linked (GlcNAc...) asparagine glycosylation occurs at asparagine 619. 4 disulfide bridges follow: cysteine 628/cysteine 673, cysteine 634/cysteine 653, cysteine 637/cysteine 650, and cysteine 682/cysteine 708. Asparagine 697 carries an N-linked (GlcNAc...) asparagine glycan. A helical membrane pass occupies residues 714 to 734 (WWLIPLLIFLLLLLVLLLLLC). The interval 734–751 (CWKYCACCKACLGLLPCC) is palmitoylated on several cysteines. Residues 735 to 1807 (WKYCACCKAC…THMDQQFFQT (1073 aa)) are Cytoplasmic-facing. Serine 773, serine 1071, and serine 1121 each carry phosphoserine. The region spanning 981–1086 (VNITIIKEQA…QVRRFQVQLS (106 aa)) is the Calx-beta domain. The segment at 1119–1141 (SASPPLPRGDLGAPQNPNAKAAG) is disordered. Fibronectin type-III domains follow at residues 1131–1220 (APQN…THQE) and 1224–1323 (EPGR…TQPK). Serine 1386, serine 1389, and serine 1405 each carry phosphoserine. Threonine 1418 carries the post-translational modification Phosphothreonine. Serine 1425 carries the post-translational modification Phosphoserine. Threonine 1514 bears the Phosphothreonine mark. 2 Fibronectin type-III domains span residues 1514–1609 (TPTR…VHPQ) and 1627–1723 (APGP…SQDG). Phosphoserine is present on serine 1776.

Belongs to the integrin beta chain family. Heterodimer of an alpha and a beta subunit. Beta-4 associates with alpha-6. Interacts (via cytoplasmic region) with COL17A1 (via cytoplasmic region). Interacts (via cytoplasmic region) with DST isoform 3 (via N-terminus). Interacts (via cytoplasmic domain) with DST (via N-terminus). Interacts with RAC1. ITGA6:ITGB4 is found in a ternary complex with NRG1 and ERBB3. ITGA6:ITGB4 is found in a ternary complex with IGF1 and IGF1R. ITGA6:ITGB4 interacts with IGF2. Interacts with TMEM268; this interaction prevents ITGB4 degradation. Post-translationally, palmitoylated by DHHC3 at several cysteines of the membrane-proximal region, enhancing stability and cell surface expression. Palmitoylation also promotes secondary association with tertaspanins.

Its subcellular location is the cell membrane. It is found in the cell junction. It localises to the hemidesmosome. In terms of biological role, integrin alpha-6/beta-4 is a receptor for laminin. It plays a critical structural role in the hemidesmosome of epithelial cells. Is required for the regulation of keratinocyte polarity and motility. ITGA6:ITGB4 binds to NRG1 (via EGF domain) and this binding is essential for NRG1-ERBB signaling. ITGA6:ITGB4 binds to IGF1 and this binding is essential for IGF1 signaling. ITGA6:ITGB4 binds to IGF2 and this binding is essential for IGF2 signaling. The sequence is that of Integrin beta-4 (Itgb4) from Rattus norvegicus (Rat).